A 303-amino-acid chain; its full sequence is Quinolinate synthase (303 aa).

Iminosuccinate contacts are provided by His24 and Ser41. Cys86 lines the [4Fe-4S] cluster pocket. Residues 112–114 (YVN) and Ser129 contribute to the iminosuccinate site. Cys172 is a binding site for [4Fe-4S] cluster. Iminosuccinate contacts are provided by residues 198 to 200 (HPE) and Thr215. Cys260 is a binding site for [4Fe-4S] cluster.

The protein belongs to the quinolinate synthase family. Type 2 subfamily. [4Fe-4S] cluster serves as cofactor.

The protein localises to the cytoplasm. It catalyses the reaction iminosuccinate + dihydroxyacetone phosphate = quinolinate + phosphate + 2 H2O + H(+). The protein operates within cofactor biosynthesis; NAD(+) biosynthesis; quinolinate from iminoaspartate: step 1/1. Functionally, catalyzes the condensation of iminoaspartate with dihydroxyacetone phosphate to form quinolinate. The sequence is that of Quinolinate synthase from Alkaliphilus metalliredigens (strain QYMF).